Reading from the N-terminus, the 298-residue chain is Probable tRNA(His) guanylyltransferase (298 aa).

D58, G59, and D105 together coordinate Mg(2+). GTP is bound by residues 58–63 and 104–105; these read DGRNFH and SD.

Belongs to the tRNA(His) guanylyltransferase family. As to quaternary structure, homotetramer. Interacts with MFN1 and MFN2; functions as a guanyl-nucleotide exchange factor/GEF for MFN2 and also probably MFN1. It depends on Mg(2+) as a cofactor. In terms of tissue distribution, expressed in many tissues.

Its subcellular location is the cytoplasm. The protein resides in the mitochondrion outer membrane. The enzyme catalyses a 5'-end ribonucleotide-tRNA(His) + GTP + ATP + H2O = a 5'-end phospho-guanosine-ribonucleotide-tRNA(His) + AMP + 2 diphosphate + H(+). Functionally, adds a GMP to the 5'-end of tRNA(His) after transcription and RNase P cleavage. This step is essential for proper recognition of the tRNA and for the fidelity of protein synthesis. Also functions as a guanyl-nucleotide exchange factor/GEF for the MFN1 and MFN2 mitofusins thereby regulating mitochondrial fusion. By regulating both mitochondrial dynamics and bioenergetic function, it contributes to cell survival following oxidative stress. This chain is Probable tRNA(His) guanylyltransferase (THG1L), found in Homo sapiens (Human).